The following is a 207-amino-acid chain: Small ribosomal subunit protein uS4 (207 aa).

The segment at 30 to 53 (DKSKFDTKPGQHGRTSGQRTSDFG) is disordered. Positions 42 to 52 (GRTSGQRTSDF) are enriched in polar residues. An S4 RNA-binding domain is found at 97-157 (SRLDNVVYRM…EKSKKQARIV (61 aa)).

This sequence belongs to the universal ribosomal protein uS4 family. Part of the 30S ribosomal subunit. Contacts protein S5. The interaction surface between S4 and S5 is involved in control of translational fidelity.

Its function is as follows. One of the primary rRNA binding proteins, it binds directly to 16S rRNA where it nucleates assembly of the body of the 30S subunit. Functionally, with S5 and S12 plays an important role in translational accuracy. This chain is Small ribosomal subunit protein uS4, found in Delftia acidovorans (strain DSM 14801 / SPH-1).